Consider the following 186-residue polypeptide: ATP synthase subunit b, chloroplastic (186 aa).

Residues 27 to 49 traverse the membrane as a helical segment; it reads LATNPINLSVVLGVLIFFGKGVL.

It belongs to the ATPase B chain family. F-type ATPases have 2 components, F(1) - the catalytic core - and F(0) - the membrane proton channel. F(1) has five subunits: alpha(3), beta(3), gamma(1), delta(1), epsilon(1). F(0) has four main subunits: a(1), b(1), b'(1) and c(10-14). The alpha and beta chains form an alternating ring which encloses part of the gamma chain. F(1) is attached to F(0) by a central stalk formed by the gamma and epsilon chains, while a peripheral stalk is formed by the delta, b and b' chains.

Its subcellular location is the plastid. It localises to the chloroplast thylakoid membrane. Its function is as follows. F(1)F(0) ATP synthase produces ATP from ADP in the presence of a proton or sodium gradient. F-type ATPases consist of two structural domains, F(1) containing the extramembraneous catalytic core and F(0) containing the membrane proton channel, linked together by a central stalk and a peripheral stalk. During catalysis, ATP synthesis in the catalytic domain of F(1) is coupled via a rotary mechanism of the central stalk subunits to proton translocation. Component of the F(0) channel, it forms part of the peripheral stalk, linking F(1) to F(0). The chain is ATP synthase subunit b, chloroplastic from Illicium oligandrum (Star anise).